The sequence spans 348 residues: Rhodopsin (348 aa).

N-acetylmethionine is present on methionine 1. The Extracellular portion of the chain corresponds to 1-36; it reads MNGTEGPNFYVPFSNITGVVRSPFEQPQYYLAEPWQ. Asparagine 2 and asparagine 15 each carry an N-linked (GlcNAc...) asparagine glycan. The chain crosses the membrane as a helical span at residues 37–61; it reads FSMLAAYMFLLIVLGFPINFLTLYV. The Cytoplasmic segment spans residues 62–73; it reads TVQHKKLRTPLN. The helical transmembrane segment at 74 to 96 threads the bilayer; it reads YILLNLAVADLFMVFGGFTTTLY. Over 97-110 the chain is Extracellular; it reads TSLHGYFVFGPTGC. Residues cysteine 110 and cysteine 187 are joined by a disulfide bond. A helical transmembrane segment spans residues 111–133; the sequence is NLEGFFATLGGEIGLWSLVVLAI. The 'Ionic lock' involved in activated form stabilization motif lies at 134-136; that stretch reads ERY. The Cytoplasmic portion of the chain corresponds to 134–152; sequence ERYVVVCKPMSNFRFGENH. The chain crosses the membrane as a helical span at residues 153-173; it reads AIMGVAFTWVMALACAAPPLV. Residues 174-202 lie on the Extracellular side of the membrane; that stretch reads GWSRYIPEGMQCSCGIDYYTLKPEVNNES. Glutamate 201 is a binding site for Zn(2+). Residues 203–224 traverse the membrane as a helical segment; sequence FVIYMFVVHFTIPMIVIFFCYG. Over 225 to 252 the chain is Cytoplasmic; that stretch reads QLVFTVKEAAAQQQESATTQKAEKEVTR. The helical transmembrane segment at 253 to 274 threads the bilayer; it reads MVIIMVIFFLICWLPYASVAMY. At 275 to 286 the chain is on the extracellular side; sequence IFTHQGSNFGPI. Glutamine 279 serves as a coordination point for Zn(2+). A helical transmembrane segment spans residues 287–308; sequence FMTLPAFFAKTASIYNPIIYIM. At lysine 296 the chain carries N6-(retinylidene)lysine. Topologically, residues 309 to 348 are cytoplasmic; that stretch reads MNKQFRNCMLTSLCCGKNPLGDDEASATASKTETSQVAPA. 2 S-palmitoyl cysteine lipidation sites follow: cysteine 322 and cysteine 323. The tract at residues 330–348 is interaction with SAG; sequence DDEASATASKTETSQVAPA. Serine 334 is modified (phosphoserine). Threonine 336 bears the Phosphothreonine mark. Serine 338 bears the Phosphoserine mark. Threonine 340 and threonine 342 each carry phosphothreonine. The residue at position 343 (serine 343) is a Phosphoserine.

Belongs to the G-protein coupled receptor 1 family. Opsin subfamily. As to quaternary structure, homodimer. May form a complex composed of RHO, GRK1 and RCVRN in a Ca(2+)-dependent manner; RCVRN prevents the interaction between GRK1 and RHO. Interacts with GRK1. Interacts (phosphorylated form) with SAG. Interacts with GNAT1. Interacts with GNAT3. SAG and G-proteins compete for a common binding site. Interacts with PRCD; the interaction promotes PRCD stability. Forms a complex with ASAP1 and ARF4. Forms a complex with ASAP1, RAB11A, Rabin8/RAB3IP, ARF4 and RAB11FIP3; the complex regulates Golgi-to-cilia rhodopsin/RHO transport in photoreceptors. In terms of processing, phosphorylated on some or all of the serine and threonine residues present in the C-terminal region. Post-translationally, contains one covalently linked retinal chromophore. Upon light absorption, the covalently bound 11-cis-retinal is converted to all-trans-retinal. After hydrolysis of the Schiff base and release of the covalently bound all-trans-retinal, active rhodopsin is regenerated by binding of a fresh molecule of 11-cis-retinal.

It localises to the membrane. It is found in the cell projection. The protein resides in the cilium. The protein localises to the photoreceptor outer segment. In terms of biological role, photoreceptor required for image-forming vision at low light intensity. Required for photoreceptor cell viability after birth. Light-induced isomerization of 11-cis to all-trans retinal triggers a conformational change that activates signaling via G-proteins. Subsequent receptor phosphorylation mediates displacement of the bound G-protein alpha subunit by the arrestin SAG and terminates signaling. The sequence is that of Rhodopsin (Rho) from Rattus norvegicus (Rat).